The sequence spans 403 residues: Phosphoglycerate kinase (403 aa).

Substrate contacts are provided by residues 21–23 (DFN), Arg-36, 59–62 (HLGR), Arg-119, and Arg-154. ATP is bound by residues Lys-207, Gly-299, Glu-330, and 357 to 360 (GGDA).

It belongs to the phosphoglycerate kinase family. Monomer.

It localises to the cytoplasm. The enzyme catalyses (2R)-3-phosphoglycerate + ATP = (2R)-3-phospho-glyceroyl phosphate + ADP. It participates in carbohydrate degradation; glycolysis; pyruvate from D-glyceraldehyde 3-phosphate: step 2/5. In Chlamydia muridarum (strain MoPn / Nigg), this protein is Phosphoglycerate kinase (pgk).